We begin with the raw amino-acid sequence, 380 residues long: UDP-N-acetylglucosamine--N-acetylmuramyl-(pentapeptide) pyrophosphoryl-undecaprenol N-acetylglucosamine transferase (380 aa).

UDP-N-acetyl-alpha-D-glucosamine is bound by residues 23–25, asparagine 137, arginine 178, serine 210, isoleucine 266, and glutamine 311; that span reads TGG.

Belongs to the glycosyltransferase 28 family. MurG subfamily.

It localises to the cell inner membrane. It carries out the reaction di-trans,octa-cis-undecaprenyl diphospho-N-acetyl-alpha-D-muramoyl-L-alanyl-D-glutamyl-meso-2,6-diaminopimeloyl-D-alanyl-D-alanine + UDP-N-acetyl-alpha-D-glucosamine = di-trans,octa-cis-undecaprenyl diphospho-[N-acetyl-alpha-D-glucosaminyl-(1-&gt;4)]-N-acetyl-alpha-D-muramoyl-L-alanyl-D-glutamyl-meso-2,6-diaminopimeloyl-D-alanyl-D-alanine + UDP + H(+). It participates in cell wall biogenesis; peptidoglycan biosynthesis. Cell wall formation. Catalyzes the transfer of a GlcNAc subunit on undecaprenyl-pyrophosphoryl-MurNAc-pentapeptide (lipid intermediate I) to form undecaprenyl-pyrophosphoryl-MurNAc-(pentapeptide)GlcNAc (lipid intermediate II). The sequence is that of UDP-N-acetylglucosamine--N-acetylmuramyl-(pentapeptide) pyrophosphoryl-undecaprenol N-acetylglucosamine transferase from Bacteroides fragilis (strain ATCC 25285 / DSM 2151 / CCUG 4856 / JCM 11019 / LMG 10263 / NCTC 9343 / Onslow / VPI 2553 / EN-2).